Reading from the N-terminus, the 260-residue chain is Small ribosomal subunit protein uS2 (260 aa).

It belongs to the universal ribosomal protein uS2 family.

This is Small ribosomal subunit protein uS2 from Streptococcus gordonii (strain Challis / ATCC 35105 / BCRC 15272 / CH1 / DL1 / V288).